Here is an 858-residue protein sequence, read N- to C-terminus: NEDD4-binding protein 1 (858 aa).

The tract at residues 17–37 (TCTEPPGGRQSPTASRAQPDS) is disordered. Polar residues predominate over residues 26–37 (QSPTASRAQPDS). The region spanning 96 to 180 (KEDVYKAKEY…VQQFVALFQE (85 aa)) is the KH-like domain. Disordered stretches follow at residues 262–321 (EDKT…TWTV) and 388–424 (QKTQSTQGAQRTSRTPDPSPCANASSTSTSNRLKEKE). The span at 285–316 (RSSESEQRDTKRQYSLERREEEQCEEREREPT) shows a compositional bias: basic and acidic residues. The span at 389–418 (KTQSTQGAQRTSRTPDPSPCANASSTSTSN) shows a compositional bias: polar residues. One can recognise an RNase NYN domain in the interval 598 to 750 (LRHIIIDGSN…LGKHGPHLDE (153 aa)). Positions 774 to 784 (SVYSQAAQSTA) are enriched in polar residues. The interval 774–823 (SVYSQAAQSTAHPSSPSHWPHSGPPDWHLPRPSPSPPPQRSPSETTELKR) is disordered. A compositionally biased stretch (low complexity) spans 785-799 (HPSSPSHWPHSGPPD). Residues 804–813 (RPSPSPPPQR) are compositionally biased toward pro residues. The coCUN stretch occupies residues 813–858 (RSPSETTELKRKLYDIFPDQKQRIDRILSDNPYMRDLNALSGLLLG).

The protein belongs to the N4BP1 family.

The protein localises to the nucleus. The protein resides in the nucleolus. It localises to the PML body. Functionally, potent suppressor of cytokine production that acts as a regulator of innate immune signaling and inflammation. Acts as a key negative regulator of select cytokine and chemokine responses elicited by TRIF-independent Toll-like receptors (TLRs), thereby limiting inflammatory cytokine responses to minor insults. Has ribonuclease activity. This Danio rerio (Zebrafish) protein is NEDD4-binding protein 1.